The primary structure comprises 461 residues: Protein IQ-DOMAIN 2 (461 aa).

The segment at 1 to 55 (MGKKAKWFSSVKKAFSPDSKKSKQKLAEGQNGVISNPPVVDNVRQSSSSPPPALA) is disordered. One can recognise an IQ domain in the interval 114–142 (EEAAAILIQTIFRGYLARRALRAMRGLVR). Positions 141–158 (VRLKLLMEGSVVKRQAAN) are calmodulin-binding. The interval 278–461 (PLESSEKEQS…GVTVTNGAGS (184 aa)) is disordered. The segment covering 310 to 345 (LTRNGSTQPNTPSSARGTPRNKNSFFSPPTPSRLNQ) has biased composition (polar residues). A Nuclear localization signal motif is present at residues 425 to 432 (KKRLSYPT).

Belongs to the IQD family. In terms of assembly, binds to multiple calmodulin (CaM) in the presence of Ca(2+) and CaM-like proteins.

It is found in the nucleus. The protein resides in the cytoplasm. Its subcellular location is the cytoskeleton. In terms of biological role, may be involved in cooperative interactions with calmodulins or calmodulin-like proteins. Recruits calmodulin proteins to microtubules, thus being a potential scaffold in cellular signaling and trafficking. May associate with nucleic acids and regulate gene expression at the transcriptional or post-transcriptional level. This chain is Protein IQ-DOMAIN 2, found in Arabidopsis thaliana (Mouse-ear cress).